We begin with the raw amino-acid sequence, 202 residues long: Holliday junction branch migration complex subunit RuvA (202 aa).

The tract at residues 1–62 (MIGYLRGRLH…EDAMELYGFT (62 aa)) is domain I. The interval 63 to 141 (RPEELHLFTL…KSGLVDGTET (79 aa)) is domain II. A flexible linker region spans residues 141 to 145 (TEAIP). The segment at 146–202 (AGGGDNDEALAALLALGYSREEIGPILARVRQELGNAAPTTAVLQAVLKTFGRGGGD) is domain III.

Belongs to the RuvA family. In terms of assembly, homotetramer. Forms an RuvA(8)-RuvB(12)-Holliday junction (HJ) complex. HJ DNA is sandwiched between 2 RuvA tetramers; dsDNA enters through RuvA and exits via RuvB. An RuvB hexamer assembles on each DNA strand where it exits the tetramer. Each RuvB hexamer is contacted by two RuvA subunits (via domain III) on 2 adjacent RuvB subunits; this complex drives branch migration. In the full resolvosome a probable DNA-RuvA(4)-RuvB(12)-RuvC(2) complex forms which resolves the HJ.

Its subcellular location is the cytoplasm. Its function is as follows. The RuvA-RuvB-RuvC complex processes Holliday junction (HJ) DNA during genetic recombination and DNA repair, while the RuvA-RuvB complex plays an important role in the rescue of blocked DNA replication forks via replication fork reversal (RFR). RuvA specifically binds to HJ cruciform DNA, conferring on it an open structure. The RuvB hexamer acts as an ATP-dependent pump, pulling dsDNA into and through the RuvAB complex. HJ branch migration allows RuvC to scan DNA until it finds its consensus sequence, where it cleaves and resolves the cruciform DNA. This chain is Holliday junction branch migration complex subunit RuvA, found in Moorella thermoacetica (strain ATCC 39073 / JCM 9320).